A 399-amino-acid chain; its full sequence is Succinyl-diaminopimelate desuccinylase (399 aa).

H80 provides a ligand contact to Zn(2+). D82 is a catalytic residue. Residue D113 coordinates Zn(2+). E147 functions as the Proton acceptor in the catalytic mechanism. Positions 148, 176, and 366 each coordinate Zn(2+).

The protein belongs to the peptidase M20A family. DapE subfamily. As to quaternary structure, homodimer. Zn(2+) is required as a cofactor. Co(2+) serves as cofactor.

The enzyme catalyses N-succinyl-(2S,6S)-2,6-diaminopimelate + H2O = (2S,6S)-2,6-diaminopimelate + succinate. It participates in amino-acid biosynthesis; L-lysine biosynthesis via DAP pathway; LL-2,6-diaminopimelate from (S)-tetrahydrodipicolinate (succinylase route): step 3/3. Its function is as follows. Catalyzes the hydrolysis of N-succinyl-L,L-diaminopimelic acid (SDAP), forming succinate and LL-2,6-diaminopimelate (DAP), an intermediate involved in the bacterial biosynthesis of lysine and meso-diaminopimelic acid, an essential component of bacterial cell walls. In Colwellia psychrerythraea (strain 34H / ATCC BAA-681) (Vibrio psychroerythus), this protein is Succinyl-diaminopimelate desuccinylase.